Here is a 209-residue protein sequence, read N- to C-terminus: Protease (209 aa).

Residues histidine 60, aspartate 77, and cysteine 127 contribute to the active site.

The protein belongs to the peptidase C5 family. Interacts with protease cofactor pVI-C; this interaction is necessary for protease activation.

It localises to the virion. Its subcellular location is the host nucleus. It carries out the reaction Cleaves proteins of the adenovirus and its host cell at two consensus sites: -Yaa-Xaa-Gly-Gly-|-Xaa- and -Yaa-Xaa-Gly-Xaa-|-Gly- (in which Yaa is Met, Ile or Leu, and Xaa is any amino acid).. Requires DNA and protease cofactor for maximal activation. Inside nascent virions, becomes partially activated by binding to the viral DNA, allowing it to cleave the cofactor that binds to the protease and fully activates it. Actin, like the viral protease cofactor, seems to act as a cofactor in the cleavage of cytokeratin 18 and of actin itself. In terms of biological role, cleaves viral precursor proteins (pTP, pIIIa, pVI, pVII, pVIII, and pX) inside newly assembled particles giving rise to mature virions. Protease complexed to its cofactor slides along the viral DNA to specifically locate and cleave the viral precursors. Mature virions have a weakened organization compared to the unmature virions, thereby facilitating subsequent uncoating. Without maturation, the particle lacks infectivity and is unable to uncoat. Late in adenovirus infection, in the cytoplasm, may participate in the cytoskeleton destruction. Cleaves host cell cytoskeletal keratins K7 and K18. In Homo sapiens (Human), this protein is Protease.